Reading from the N-terminus, the 128-residue chain is Small ribosomal subunit protein uS13 (128 aa).

Residues 98 to 128 (VRGQRTRTNARTRKGPRPRIGVKKKGKQAGS) are disordered. Basic residues predominate over residues 101–128 (QRTRTNARTRKGPRPRIGVKKKGKQAGS).

Belongs to the universal ribosomal protein uS13 family. As to quaternary structure, part of the 30S ribosomal subunit. Forms a loose heterodimer with protein S19. Forms two bridges to the 50S subunit in the 70S ribosome.

Located at the top of the head of the 30S subunit, it contacts several helices of the 16S rRNA. In the 70S ribosome it contacts the 23S rRNA (bridge B1a) and protein L5 of the 50S subunit (bridge B1b), connecting the 2 subunits; these bridges are implicated in subunit movement. Contacts the tRNAs in the A and P-sites. The sequence is that of Small ribosomal subunit protein uS13 from Thermomicrobium roseum (strain ATCC 27502 / DSM 5159 / P-2).